The following is a 68-amino-acid chain: Small ribosomal subunit protein bS21 (68 aa).

It belongs to the bacterial ribosomal protein bS21 family.

The chain is Small ribosomal subunit protein bS21 from Endomicrobium trichonymphae.